The sequence spans 305 residues: Methionyl-tRNA formyltransferase (305 aa).

A (6S)-5,6,7,8-tetrahydrofolate-binding site is contributed by 108-111 (SLLP).

The protein belongs to the Fmt family.

The catalysed reaction is L-methionyl-tRNA(fMet) + (6R)-10-formyltetrahydrofolate = N-formyl-L-methionyl-tRNA(fMet) + (6S)-5,6,7,8-tetrahydrofolate + H(+). In terms of biological role, attaches a formyl group to the free amino group of methionyl-tRNA(fMet). The formyl group appears to play a dual role in the initiator identity of N-formylmethionyl-tRNA by promoting its recognition by IF2 and preventing the misappropriation of this tRNA by the elongation apparatus. The polypeptide is Methionyl-tRNA formyltransferase (Clavibacter sepedonicus (Clavibacter michiganensis subsp. sepedonicus)).